The primary structure comprises 72 residues: UPF0270 protein Ent638_3781 (72 aa).

Belongs to the UPF0270 family.

This chain is UPF0270 protein Ent638_3781, found in Enterobacter sp. (strain 638).